A 428-amino-acid polypeptide reads, in one-letter code: Serine--tRNA ligase (428 aa).

235-237 (TAE) contacts L-serine. 266–268 (RSE) is a binding site for ATP. Residue E289 coordinates L-serine. 353–356 (EISS) contacts ATP. S389 lines the L-serine pocket.

This sequence belongs to the class-II aminoacyl-tRNA synthetase family. Type-1 seryl-tRNA synthetase subfamily. In terms of assembly, homodimer. The tRNA molecule binds across the dimer.

The protein resides in the cytoplasm. The enzyme catalyses tRNA(Ser) + L-serine + ATP = L-seryl-tRNA(Ser) + AMP + diphosphate + H(+). It catalyses the reaction tRNA(Sec) + L-serine + ATP = L-seryl-tRNA(Sec) + AMP + diphosphate + H(+). It functions in the pathway aminoacyl-tRNA biosynthesis; selenocysteinyl-tRNA(Sec) biosynthesis; L-seryl-tRNA(Sec) from L-serine and tRNA(Sec): step 1/1. Functionally, catalyzes the attachment of serine to tRNA(Ser). Is also able to aminoacylate tRNA(Sec) with serine, to form the misacylated tRNA L-seryl-tRNA(Sec), which will be further converted into selenocysteinyl-tRNA(Sec). The chain is Serine--tRNA ligase from Shewanella pealeana (strain ATCC 700345 / ANG-SQ1).